Reading from the N-terminus, the 296-residue chain is Cell surface glycoprotein CD200 receptor 3 (296 aa).

Positions 1–25 (MHALGRTLALMLLIFITILVPESSC) are cleaved as a signal peptide. The Extracellular segment spans residues 26 to 245 (SVKGREEIPP…NRGTTSILPS (220 aa)). One can recognise an Ig-like V-type domain in the interval 48–162 (PDGVGVTMEI…GIFQERHSIQ (115 aa)). An intrachain disulfide couples Cys-75 to Cys-146. One can recognise an Ig-like C2-type domain in the interval 151 to 232 (TDGIFQERHS…SHLTDNWILS (82 aa)). N-linked (GlcNAc...) asparagine glycosylation is found at Asn-167 and Asn-199. Cys-172 and Cys-220 are disulfide-bonded. Residues 246–266 (LLSILYVKLAVTVLIVGFAFF) form a helical membrane-spanning segment. Residues 267 to 296 (QKRNYFSSRDLVFMKERRSKRSVWQREALG) lie on the Cytoplasmic side of the membrane.

Belongs to the CD200R family. In terms of assembly, isoform 3 interacts with TYROBP. Isoform 8 does not interact with TYROBP. In terms of tissue distribution, expressed in uterus and bone marrow-derived mast cells (at protein level). Expressed in uterus, spleen, bone marrow-derived dendritic, basophil and mast cells. Expressed in the lung of N.brasiliensis-infected mice. Weakly expressed in brain, testis, lung and thymus.

It is found in the membrane. In terms of biological role, according to PubMed:15187158 isoform 4 is a receptor for the CD200 cell surface glycoprotein. According to PubMed:16081818 isoform 4 is not a receptor for the CD200/OX2 cell surface glycoprotein. Isoform 1, isoform 2 and isoform 3 are involved in the recruitment or surface expression of the TYROBP receptor. Isoform 6, isoform 7 and isoform 8 are not involved in the recruitment or surface expression of the TYROBP receptor. The sequence is that of Cell surface glycoprotein CD200 receptor 3 (Cd200r3) from Mus musculus (Mouse).